Reading from the N-terminus, the 189-residue chain is Glycerol-3-phosphate acyltransferase (189 aa).

The next 5 helical transmembrane spans lie at 1–21 (MFWLLALLAYLLGSLSFAIVL), 50–70 (KLAILTLLGDLCKGLLPVLLA), 77–97 (LHAQAWVGICAVLGHLFPLYF), 111–131 (MLMGLYFPAALLAIGAWLLTF), and 151–171 (LLAWREPEALLPISVLTVMIV).

Belongs to the PlsY family. Probably interacts with PlsX.

It is found in the cell inner membrane. It catalyses the reaction an acyl phosphate + sn-glycerol 3-phosphate = a 1-acyl-sn-glycero-3-phosphate + phosphate. It functions in the pathway lipid metabolism; phospholipid metabolism. Functionally, catalyzes the transfer of an acyl group from acyl-phosphate (acyl-PO(4)) to glycerol-3-phosphate (G3P) to form lysophosphatidic acid (LPA). This enzyme utilizes acyl-phosphate as fatty acyl donor, but not acyl-CoA or acyl-ACP. The protein is Glycerol-3-phosphate acyltransferase of Pseudomonas putida (strain ATCC 700007 / DSM 6899 / JCM 31910 / BCRC 17059 / LMG 24140 / F1).